We begin with the raw amino-acid sequence, 198 residues long: Phosphoheptose isomerase (198 aa).

Residues isoleucine 40–serine 198 form the SIS domain. Asparagine 55 to glycine 57 contacts substrate. Residues histidine 64 and glutamate 68 each coordinate Zn(2+). Substrate-binding positions include glutamate 68, asparagine 97 to aspartate 98, serine 123 to serine 125, serine 128, and glutamine 175. Glutamine 175 and histidine 183 together coordinate Zn(2+).

The protein belongs to the SIS family. GmhA subfamily. As to quaternary structure, homotetramer. Zn(2+) serves as cofactor.

It is found in the cytoplasm. The catalysed reaction is 2 D-sedoheptulose 7-phosphate = D-glycero-alpha-D-manno-heptose 7-phosphate + D-glycero-beta-D-manno-heptose 7-phosphate. It functions in the pathway carbohydrate biosynthesis; D-glycero-D-manno-heptose 7-phosphate biosynthesis; D-glycero-alpha-D-manno-heptose 7-phosphate and D-glycero-beta-D-manno-heptose 7-phosphate from sedoheptulose 7-phosphate: step 1/1. Its function is as follows. Catalyzes the isomerization of sedoheptulose 7-phosphate in D-glycero-D-manno-heptose 7-phosphate. The polypeptide is Phosphoheptose isomerase (Bradyrhizobium sp. (strain BTAi1 / ATCC BAA-1182)).